The chain runs to 674 residues: UvrABC system protein C (674 aa).

The region spanning 16–95 is the GIY-YIG domain; the sequence is TNPGVYRFRD…IKEFKPRFNV (80 aa). Residues 207–242 enclose the UVR domain; sequence KRFTNKLEKQMAAAVARLDYEQAARIRDDITALRKV.

The protein belongs to the UvrC family. Interacts with UvrB in an incision complex.

It is found in the cytoplasm. Its function is as follows. The UvrABC repair system catalyzes the recognition and processing of DNA lesions. UvrC both incises the 5' and 3' sides of the lesion. The N-terminal half is responsible for the 3' incision and the C-terminal half is responsible for the 5' incision. The sequence is that of UvrABC system protein C from Pseudarthrobacter chlorophenolicus (strain ATCC 700700 / DSM 12829 / CIP 107037 / JCM 12360 / KCTC 9906 / NCIMB 13794 / A6) (Arthrobacter chlorophenolicus).